Here is a 231-residue protein sequence, read N- to C-terminus: UPF0758 protein aq_1610 (231 aa).

The MPN domain occupies 110–231 (SIRNPQEAFE…YFSFREEGVL (122 aa)). Zn(2+) is bound by residues His-180, His-182, and Asp-193. A JAMM motif motif is present at residues 180-193 (HNHPQGEPSPSNED).

Belongs to the UPF0758 family.

In Aquifex aeolicus (strain VF5), this protein is UPF0758 protein aq_1610.